The following is a 306-amino-acid chain: Pantothenate synthetase (306 aa).

37-44 (MGALHEGH) contributes to the ATP binding site. His44 acts as the Proton donor in catalysis. Gln69 serves as a coordination point for (R)-pantoate. Residue Gln69 coordinates beta-alanine. 155–158 (GEKD) provides a ligand contact to ATP. Gln161 serves as a coordination point for (R)-pantoate. Residues Val184 and 192–195 (KSSR) each bind ATP.

This sequence belongs to the pantothenate synthetase family. In terms of assembly, homodimer.

It localises to the cytoplasm. The enzyme catalyses (R)-pantoate + beta-alanine + ATP = (R)-pantothenate + AMP + diphosphate + H(+). Its pathway is cofactor biosynthesis; (R)-pantothenate biosynthesis; (R)-pantothenate from (R)-pantoate and beta-alanine: step 1/1. Functionally, catalyzes the condensation of pantoate with beta-alanine in an ATP-dependent reaction via a pantoyl-adenylate intermediate. The chain is Pantothenate synthetase from Corynebacterium jeikeium (strain K411).